A 606-amino-acid chain; its full sequence is Leucine-rich repeat and immunoglobulin-like domain-containing nogo receptor-interacting protein 2 (606 aa).

Residues 1 to 27 form the signal peptide; sequence MLHTAIPCWQPFLGLAVVLLLMGSTIG. An LRRNT domain is found at 28-57; the sequence is CPARCECSAQNKSVSCHRRRLLAIPEGIPI. Residues 28–545 lie on the Extracellular side of the membrane; that stretch reads CPARCECSAQ…LDLKTILVST (518 aa). An N-linked (GlcNAc...) asparagine glycan is attached at N38. LRR repeat units lie at residues 58–79, 82–103, 106–127, 130–151, 154–175, 178–199, 202–223, 226–247, 250–271, 274–295, 298–319, and 322–343; these read ETKI…EFIS, LLEE…AFNN, NLRS…VFTG, NLTK…MFQD, NLKS…AFSG, SLEQ…ALSH, SLIA…AFKR, HLKN…NSLY, NLTS…AFKH, YLTH…MFSD, RLQE…SFQG, and FLRV…VFSS. The N-linked (GlcNAc...) asparagine glycan is linked to N130. N-linked (GlcNAc...) asparagine glycosylation is present at N188. N-linked (GlcNAc...) asparagine glycosylation is found at N250, N260, and N279. N-linked (GlcNAc...) asparagine glycosylation is present at N327. Residues 355–409 enclose the LRRCT domain; sequence NPLACDCRLLWLLQRQPNLQFGGQQPMCAGPDTIRERSFKDFHSTALSFYFTCKK. The cysteines at positions 432 and 483 are disulfide-linked. N491, N522, and N527 each carry an N-linked (GlcNAc...) asparagine glycan. The chain crosses the membrane as a helical span at residues 546–566; sequence AMGCFTFLGVVLFCFLLLFVW. At 567–606 the chain is on the cytoplasmic side; it reads SRGKGKHKNSIDLEYVPRKNNGAVVEGEVAGPRRFNMKMI.

The protein localises to the membrane. This chain is Leucine-rich repeat and immunoglobulin-like domain-containing nogo receptor-interacting protein 2 (Lingo2), found in Mus musculus (Mouse).